A 592-amino-acid chain; its full sequence is Arginine--tRNA ligase (592 aa).

Positions 134-144 (ANPTGPLHVGH) match the 'HIGH' region motif.

The protein belongs to the class-I aminoacyl-tRNA synthetase family. Monomer.

The protein localises to the cytoplasm. The enzyme catalyses tRNA(Arg) + L-arginine + ATP = L-arginyl-tRNA(Arg) + AMP + diphosphate. The polypeptide is Arginine--tRNA ligase (Coxiella burnetii (strain CbuG_Q212) (Coxiella burnetii (strain Q212))).